The primary structure comprises 567 residues: MAATFLPATSLRLTQNSTLRFLSFFTISNPSYSLFRPLRRRVLPPFDAFPANSRRRCFCTAVSESLGSGDGNKVESYEKRFGSKVGEFRKKLRIAEVKGGADEGLSRVGQSLNIMGWVRTLRSQSSVTFIEINDGSCLSNLQCVMTSDAEGYDQVESGSILTGASVSVQGTIVASQGTKQKVELKVEKIIVVGECDSSYPIQKKRVSREFLRTKAHLRPRTNTFGAVARVRNTLAYATHKFFQESGFVWVASPIITASDCEGAGEQFCVTTLIPSSHENTDTSIDAIPKTKGGLIDWSQDFFGKPAFLTVSGQLNGETYATALSDVYTFGPTFRAENSNTSRHLAEFWMIEPELAFADLDDDMACATAYLQYVVKYVLDNCKEDMEFFDTWIEKGIIRRLSDVAEKEFLQLGYTDAIEILLKANKKFDFPVKWGLDLQSEHERYITEEAFGGRPVIIRDYPKEIKAFYMRENDDGKTVAAMDMLVPRIGELIGGSQREERLEVLEARLDELKLNKESYWWYLDLRRYGSVPHAGFGLGFERLVQFVTGIDNIRDVIPFPRTPASAEF.

The OB DNA-binding region spans 113–191 (NIMGWVRTLR…VELKVEKIIV (79 aa)).

The protein belongs to the class-II aminoacyl-tRNA synthetase family.

The protein localises to the plastid. The protein resides in the chloroplast. It localises to the mitochondrion. It carries out the reaction tRNA(Asn) + L-asparagine + ATP = L-asparaginyl-tRNA(Asn) + AMP + diphosphate + H(+). The polypeptide is Asparagine--tRNA ligase, chloroplastic/mitochondrial (Arabidopsis thaliana (Mouse-ear cress)).